Consider the following 364-residue polypeptide: GDSL esterase/lipase 7 (364 aa).

The signal sequence occupies residues 1 to 19 (MKSLLICLVLLELVWLGNG). The active-site Nucleophile is the serine 37. N-linked (GlcNAc...) asparagine glycans are attached at residues asparagine 236, asparagine 237, and asparagine 264. Active-site residues include aspartate 329 and histidine 332. Asparagine 351 is a glycosylation site (N-linked (GlcNAc...) asparagine).

The protein belongs to the 'GDSL' lipolytic enzyme family.

It is found in the secreted. The polypeptide is GDSL esterase/lipase 7 (GLIP7) (Arabidopsis thaliana (Mouse-ear cress)).